The following is a 104-amino-acid chain: Pyrimidine/purine nucleoside phosphorylase (104 aa).

The protein belongs to the nucleoside phosphorylase PpnP family.

It carries out the reaction a purine D-ribonucleoside + phosphate = a purine nucleobase + alpha-D-ribose 1-phosphate. The catalysed reaction is adenosine + phosphate = alpha-D-ribose 1-phosphate + adenine. The enzyme catalyses cytidine + phosphate = cytosine + alpha-D-ribose 1-phosphate. It catalyses the reaction guanosine + phosphate = alpha-D-ribose 1-phosphate + guanine. It carries out the reaction inosine + phosphate = alpha-D-ribose 1-phosphate + hypoxanthine. The catalysed reaction is thymidine + phosphate = 2-deoxy-alpha-D-ribose 1-phosphate + thymine. The enzyme catalyses uridine + phosphate = alpha-D-ribose 1-phosphate + uracil. It catalyses the reaction xanthosine + phosphate = alpha-D-ribose 1-phosphate + xanthine. Functionally, catalyzes the phosphorolysis of diverse nucleosides, yielding D-ribose 1-phosphate and the respective free bases. Can use uridine, adenosine, guanosine, cytidine, thymidine, inosine and xanthosine as substrates. Also catalyzes the reverse reactions. The protein is Pyrimidine/purine nucleoside phosphorylase of Geobacter metallireducens (strain ATCC 53774 / DSM 7210 / GS-15).